Consider the following 342-residue polypeptide: Predicted GPI-anchored protein 54 (342 aa).

Residues 1–16 form the signal peptide; sequence MRANYLLLLAATAVQA. Residues asparagine 25, asparagine 105, and asparagine 151 are each glycosylated (N-linked (GlcNAc...) asparagine). Glycine 314 carries the GPI-anchor amidated glycine lipid modification. A propeptide spans 315–342 (removed in mature form); it reads ASQSHPISSYSNYTISDYAPPISSYYSL. Asparagine 326 is a glycosylation site (N-linked (GlcNAc...) asparagine).

It is found in the cell membrane. In Candida albicans (strain SC5314 / ATCC MYA-2876) (Yeast), this protein is Predicted GPI-anchored protein 54 (PGA54).